Here is a 224-residue protein sequence, read N- to C-terminus: CRIB domain-containing protein RIC1 (224 aa).

In terms of domain architecture, CRIB spans 29 to 42 (IGFPTDVKHVAHIG). The tract at residues 38–224 (VAHIGSDGPT…SVDTTCNDII (187 aa)) is disordered. Composition is skewed to polar residues over residues 69–84 (SRGNSNKYNPQGTNQR), 114–132 (PNHNGSPPRKSSGNAASSD), 144–155 (AHGSTDSSNDQE), and 215–224 (SVDTTCNDII).

As to quaternary structure, interacts with ARAC11/ROP1. Expressed in columella cells from the root tip and epidermal cells at the base of lateral roots, leaves, stems, flowers, anthers, pollen and siliques.

It localises to the cytoplasm. The protein localises to the cytoskeleton. Functions as a downstream effector of Rho-related GTP binding proteins of the 'Rho of Plants' (ROPs) family. Participates in the propagation of ROP GTPase signals in specific cellular responses. Required for cortical microtubule organization. Promotes microtubule bundling and formation of well-ordered microtubule arrays in the neck region of pavement cells. This restricts cell lateral expansion to generate the narrow neck morphology of pavement cells. Its function is inhibited when it interacts with activated ARAC4/ROP2. Represses ARAC4/ROP2 activation and antagonizes the RIC4-actin pathway that promotes the assembly of cortical actin microfilaments. Acts as a downstream effector of ARAC3/ROP6 which functions in a signaling pathway that negatively regulates clathrin-mediated endocytosis and internalization of PIN1 and PIN2. Required for the asymmetric auxin distribution during root gravitropism and vascular patterning. Positively regulates auxin responses, but negatively regulates ABA responses during lateral root development and primary root elongation. The sequence is that of CRIB domain-containing protein RIC1 (RIC1) from Arabidopsis thaliana (Mouse-ear cress).